Consider the following 627-residue polypeptide: E3 ubiquitin-protein ligase DTX1 (627 aa).

2 consecutive WWE domains span residues 14 to 94 and 95 to 171; these read GLGF…PVRR and NFYD…RLRR. Disordered stretches follow at residues 222 to 254, 269 to 327, and 368 to 398; these read QRRKAPIAPAAPPAPPPPPPPLPPGGPPGALVV, PATG…ALPV, and PPVSKSDVKPVPGVPGVCRKTKKKHLKKSKN. Pro residues-rich tracts occupy residues 230-248 and 275-287; these read PAAPPAPPPPPPPLPPGGP and EPAPPPGVPPRSP. Residues 240–243 carry the SH3-binding motif; sequence PPPL. The span at 296 to 314 shows a compositional bias: polar residues; it reads PGQNNLSRPGPQRSTSVSA. Residues 386-396 show a composition bias toward basic residues; the sequence is RKTKKKHLKKS. Residues 418 to 479 form an RING-type zinc finger; that stretch reads CTICMERLVT…DGSLQCPTCK (62 aa).

This sequence belongs to the Deltex family. In terms of assembly, homodimer. May form a heterodimer with other members of the Deltex family. Interacts with NOTCH1 via its N-terminal region and EIF3F, the interaction is required for NOTCH1 deubiquitination. Interacts with EP300. Forms a heterodimer with BBAP; the heterodimerization leading to an increase of in vitro ubiquitin ligase activity. Interacts with ITCH. Post-translationally, ubiquitinated; undergoes 'Lys-29'-linked polyubiquitination catalyzed by ITCH. Predominantly expressed in the brain and testis. Weakly expressed in the thymus, spleen and ovary. Predominantly expressed in regions containing post-mitotic differentiating neurons.

It is found in the cytoplasm. The protein localises to the nucleus. The catalysed reaction is S-ubiquitinyl-[E2 ubiquitin-conjugating enzyme]-L-cysteine + [acceptor protein]-L-lysine = [E2 ubiquitin-conjugating enzyme]-L-cysteine + N(6)-ubiquitinyl-[acceptor protein]-L-lysine.. It participates in protein modification; protein ubiquitination. Functionally, regulator of Notch signaling, a signaling pathway involved in cell-cell communications that regulates a broad spectrum of cell-fate determinations. Mainly acts as a positive regulator of Notch, but it also acts as a negative regulator, depending on the developmental and cell context. Mediates the antineural activity of Notch, possibly by inhibiting the transcriptional activation mediated by MATCH1. Involved in neurogenesis, lymphogenesis and myogenesis, and may also be involved in MZB (Marginal zone B) cell differentiation. Promotes B-cell development at the expense of T-cell development, suggesting that it can antagonize NOTCH1. Functions as an ubiquitin ligase protein in vivo, mediating ubiquitination and promoting degradation of MEKK1, suggesting that it may regulate the Notch pathway via some ubiquitin ligase activity. The polypeptide is E3 ubiquitin-protein ligase DTX1 (Dtx1) (Mus musculus (Mouse)).